The following is a 251-amino-acid chain: Protection of telomeres homolog 2 (251 aa).

Residues Glu221 to Gln251 form a disordered region.

This sequence belongs to the telombin family.

It is found in the nucleus. The protein resides in the chromosome. It localises to the telomere. Its function is as follows. Telomeric DNA-binding protein, which binds to two or more single-stranded G-rich repeat sequences (G-strand), with high specificity to the 5'-TTAGGC-3' sequence. In addition, repeat sequence binding requires a 3' single-stranded telomeric overhang. Acts redundantly with pot-1 to negatively regulate telomerase-mediated telomere extension. Also regulates telomere length by the telomerase-independent telomere maintenance pathway called ALT (alternative lengthening of telomeres). Does not appear to have a role in anchoring telomeres to the nuclear envelope. The chain is Protection of telomeres homolog 2 from Caenorhabditis elegans.